Consider the following 361-residue polypeptide: Outer mitochondrial transmembrane helix translocase (361 aa).

At 1–15 the chain is on the mitochondrial intermembrane side; the sequence is MVHAEAFSRPLSRNE. The chain crosses the membrane as a helical span at residues 16-32; the sequence is VVGLIFRLTIFGAVTYF. The Cytoplasmic portion of the chain corresponds to 33–361; it reads TIKWMVDAID…QNVLTHVCLD (329 aa). 133 to 140 serves as a coordination point for ATP; that stretch reads GPPGCGKT. Ser-322 is subject to Phosphoserine.

It belongs to the AAA ATPase family. MSP1 subfamily. Interacts with GRIA2 and GRIP1 in an ATP-dependent manner. ATAD1-catalyzed ATP hydrolysis disrupts not only its binding to GRIA2 and GRIP1, but also interaction between GRIP1 and GRIA2, leading to AMPAR complex disassembly.

The protein localises to the mitochondrion outer membrane. It is found in the peroxisome membrane. It localises to the postsynaptic cell membrane. It catalyses the reaction [protein]-with a C-terminal TM segment(out) + ATP + H2O = [protein]-with a C-terminal TM segment(in) + ADP + phosphate + H(+). In terms of biological role, outer mitochondrial translocase required to remove mislocalized tail-anchored transmembrane proteins on mitochondria. Specifically recognizes and binds tail-anchored transmembrane proteins: acts as a dislocase that mediates the ATP-dependent extraction of mistargeted tail-anchored transmembrane proteins from the mitochondrion outer membrane. Also plays a critical role in regulating the surface expression of AMPA receptors (AMPAR), thereby regulating synaptic plasticity and learning and memory. Required for NMDA-stimulated AMPAR internalization and inhibition of GRIA1 and GRIA2 recycling back to the plasma membrane; these activities are ATPase-dependent. In Homo sapiens (Human), this protein is Outer mitochondrial transmembrane helix translocase.